The chain runs to 320 residues: Ferrochelatase (320 aa).

The Fe cation site is built by His194 and Glu275.

This sequence belongs to the ferrochelatase family. In terms of assembly, monomer.

It localises to the cytoplasm. The catalysed reaction is heme b + 2 H(+) = protoporphyrin IX + Fe(2+). Its pathway is porphyrin-containing compound metabolism; protoheme biosynthesis; protoheme from protoporphyrin-IX: step 1/1. In terms of biological role, catalyzes the ferrous insertion into protoporphyrin IX. This is Ferrochelatase from Shigella sonnei (strain Ss046).